The chain runs to 462 residues: Glutamate--tRNA ligase 1 (462 aa).

Residues 8–18 carry the 'HIGH' region motif; it reads PSPTGYLHIGG. Positions 236 to 240 match the 'KMSKS' region motif; that stretch reads KLSKR. Residue K239 coordinates ATP.

Belongs to the class-I aminoacyl-tRNA synthetase family. Glutamate--tRNA ligase type 1 subfamily. In terms of assembly, monomer.

The protein resides in the cytoplasm. It carries out the reaction tRNA(Glu) + L-glutamate + ATP = L-glutamyl-tRNA(Glu) + AMP + diphosphate. In terms of biological role, catalyzes the attachment of glutamate to tRNA(Glu) in a two-step reaction: glutamate is first activated by ATP to form Glu-AMP and then transferred to the acceptor end of tRNA(Glu). The sequence is that of Glutamate--tRNA ligase 1 from Sulfurovum sp. (strain NBC37-1).